Here is a 445-residue protein sequence, read N- to C-terminus: Probable glycine dehydrogenase (decarboxylating) subunit 1 (445 aa).

It belongs to the GcvP family. N-terminal subunit subfamily. The glycine cleavage system is composed of four proteins: P, T, L and H. In this organism, the P 'protein' is a heterodimer of two subunits.

The catalysed reaction is N(6)-[(R)-lipoyl]-L-lysyl-[glycine-cleavage complex H protein] + glycine + H(+) = N(6)-[(R)-S(8)-aminomethyldihydrolipoyl]-L-lysyl-[glycine-cleavage complex H protein] + CO2. In terms of biological role, the glycine cleavage system catalyzes the degradation of glycine. The P protein binds the alpha-amino group of glycine through its pyridoxal phosphate cofactor; CO(2) is released and the remaining methylamine moiety is then transferred to the lipoamide cofactor of the H protein. The polypeptide is Probable glycine dehydrogenase (decarboxylating) subunit 1 (Chlorobium chlorochromatii (strain CaD3)).